The following is a 776-amino-acid chain: Hepatocyte growth factor-regulated tyrosine kinase substrate (776 aa).

A VHS domain is found at 15–143 (ATSQLLLETD…IMKVEGHVFP (129 aa)). An FYVE-type zinc finger spans residues 160 to 220 (WVDAEECHRC…VCEPCYEQLN (61 aa)). Cysteine 166, cysteine 169, cysteine 182, cysteine 185, cysteine 190, and cysteine 193 together coordinate Zn(2+). Lysine 207 is subject to N6-acetyllysine. Cysteine 212 and cysteine 215 together coordinate Zn(2+). Position 216 is a phosphotyrosine (tyrosine 216). The interval 223 to 319 (AEGKAASTTE…SPVNSSAPLA (97 aa)) is disordered. Residues 225–542 (GKAASTTELP…QRLQEQEKER (318 aa)) are interaction with SNX1. The 20-residue stretch at 258-277 (QEEEELQLALALSQSEAEEK) folds into the UIM domain. The span at 294–311 (PAPLASSAPPAGSLYSSP) shows a compositional bias: low complexity. A phosphotyrosine mark is found at tyrosine 308, tyrosine 329, and tyrosine 334. The disordered stretch occupies residues 338–401 (KQEEARKSPT…SEQYQNGESE (64 aa)). Over residues 379 to 398 (TDSQPITSCSGPFSEQYQNG) the composition is skewed to polar residues. The interval 444–542 (SINSTHPQLL…QRLQEQEKER (99 aa)) is interaction with SNAP25 and TRAK2. Residues 453-571 (LELLNRLDER…FPLPYAQLQA (119 aa)) form an interaction with STAM region. Positions 479–776 (ARGALSALRE…GNETQLISFD (298 aa)) are interaction with NF2. The residue at position 550 (lysine 550) is an N6-succinyllysine. Positions 719-776 (GQDASLPAQQPYITGQQPMYQQMAPSTGPPQQQPPVAQPPPTQGPPAQGNETQLISFD) are disordered. The segment covering 725 to 743 (PAQQPYITGQQPMYQQMAP) has biased composition (polar residues). Positions 745 to 762 (TGPPQQQPPVAQPPPTQG) are enriched in pro residues. A compositionally biased stretch (polar residues) spans 767–776 (GNETQLISFD).

As to quaternary structure, component of the ESCRT-0 complex composed of STAM or STAM2 and HGS. Part of a complex at least composed of HSG, STAM2 (or probably STAM) and EPS15. Interacts with STAM. Interacts with STAM2. Interacts with EPS15; the interaction is direct, calcium-dependent and inhibited by SNAP25. Identified in a complex with STAM and LITAF. Found in a complex with STAM and E3 ligase ITCH and DTX3L. Interacts with E3 ligase DTX3L; the interaction brings together STAM and HSG, promotes their recruitment to early endosomes and decreases STAM and HGS ubiquitination by ITCH. Interacts with NF2; the interaction is direct. Interacts with ubiquitin; the interaction is direct. Interacts with VPS37C. Interacts with SMAD1, SMAD2 and SMAD3. Interacts with TSG101; the interaction mediates the association with the ESCRT-I complex. Interacts with SNAP25; the interaction is direct and decreases with addition of increasing concentrations of free calcium. Interacts with SNX1; the interaction is direct. Component of a 550 kDa membrane complex at least composed of HGS and SNX1 but excluding EGFR. Interacts with TRAK2. Interacts with TRAK1. Component of the CART complex, at least composed of ACTN4, HGS/HRS, MYO5B and TRIM3. Interacts (via UIM domain) with UBQLN1 (via ubiquitin-like domain). Interacts with ARRDC3. Identified in a complex containing at least ARRDC4, AVPR2 and HGS. Interacts with LAPTM4B; promotes HGS ubiquitination. Phosphorylated on Tyr-334. This phosphorylation occurs in response to EGF. A minor site of phosphorylation on Tyr-329 is detected. Protein phosphorylation may also be triggered in response to IL-2, GM-CSF and HGF. Post-translationally, ubiquitinated by ITCH. Ubiquitously expressed.

It is found in the cytoplasm. Its subcellular location is the early endosome membrane. The protein localises to the endosome. The protein resides in the multivesicular body membrane. Functionally, involved in intracellular signal transduction mediated by cytokines and growth factors. When associated with STAM, it suppresses DNA signaling upon stimulation by IL-2 and GM-CSF. Could be a direct effector of PI3-kinase in vesicular pathway via early endosomes and may regulate trafficking to early and late endosomes by recruiting clathrin. May concentrate ubiquitinated receptors within clathrin-coated regions. Involved in down-regulation of receptor tyrosine kinase via multivesicular body (MVBs) when complexed with STAM (ESCRT-0 complex). The ESCRT-0 complex binds ubiquitin and acts as a sorting machinery that recognizes ubiquitinated receptors and transfers them to further sequential lysosomal sorting/trafficking processes. Involved in receptor recycling via its association with the CART complex, a multiprotein complex required for efficient transferrin receptor recycling but not for EGFR degradation. May contribute to the efficient recruitment of SMADs to the activin receptor complex. This chain is Hepatocyte growth factor-regulated tyrosine kinase substrate (Hgs), found in Rattus norvegicus (Rat).